Reading from the N-terminus, the 152-residue chain is Succinate dehydrogenase [ubiquinone] cytochrome b small subunit, mitochondrial (152 aa).

Residues 1-21 (MATLLRVSSLCRANRASAFKS) constitute a mitochondrion transit peptide. At 22 to 56 (LLIRPVPCLTQDHHMVQTSQIHTSPNHHAGSKAAS) the chain is on the mitochondrial matrix side. The chain crosses the membrane as a helical span at residues 57 to 78 (MHWTSERALSVALLGLLPAAYL). Residues 79-83 (YPGAA) lie on the Mitochondrial intermembrane side of the membrane. The helical transmembrane segment at 84 to 104 (MDYSLAAALTLHGHWGLGQVV) threads the bilayer. Histidine 95 contacts heme b. At 105 to 113 (TDYVHGDAK) the chain is on the mitochondrial matrix side. Tyrosine 107 lines the a ubiquinone pocket. Residues 114-135 (IKMANTSLFALSALTFAGLCYF) form a helical membrane-spanning segment. Over 136 to 152 (NYHDVGICKAVSMLWSL) the chain is Mitochondrial intermembrane.

The protein belongs to the CybS family. As to quaternary structure, component of complex II composed of four subunits: the flavoprotein (FP) SDHA, iron-sulfur protein (IP) SDHB, and a cytochrome b560 composed of SDHC and SDHD.

Its subcellular location is the mitochondrion inner membrane. It functions in the pathway carbohydrate metabolism; tricarboxylic acid cycle. Its function is as follows. Membrane-anchoring subunit of succinate dehydrogenase (SDH) that is involved in complex II of the mitochondrial electron transport chain and is responsible for transferring electrons from succinate to ubiquinone (coenzyme Q). SDH also oxidizes malate to the non-canonical enol form of oxaloacetate, enol-oxaloacetate. Enol-oxaloacetate, which is a potent inhibitor of the succinate dehydrogenase activity, is further isomerized into keto-oxaloacetate. The sequence is that of Succinate dehydrogenase [ubiquinone] cytochrome b small subunit, mitochondrial (sdhd) from Xenopus tropicalis (Western clawed frog).